Consider the following 89-residue polypeptide: Large ribosomal subunit protein bL27 (89 aa).

The segment at 1–20 (MAHKKAGGSSRNGRDSAGRR) is disordered.

The protein belongs to the bacterial ribosomal protein bL27 family.

The protein is Large ribosomal subunit protein bL27 of Rhizorhabdus wittichii (strain DSM 6014 / CCUG 31198 / JCM 15750 / NBRC 105917 / EY 4224 / RW1) (Sphingomonas wittichii).